Consider the following 187-residue polypeptide: Phosphatidylethanolamine-binding protein 2 (187 aa).

3 positions are modified to phosphoserine: Ser13, Ser52, and Ser54.

It belongs to the phosphatidylethanolamine-binding protein family. Testis specific.

Its subcellular location is the cytoplasm. Functionally, may bind to phospholipids. May act as serine protease inhibitor. This Mus musculus (Mouse) protein is Phosphatidylethanolamine-binding protein 2 (Pbp2).